The sequence spans 170 residues: Cathelicidin antimicrobial peptide (170 aa).

An N-terminal signal peptide occupies residues 1-30 (MKTQRDSPSLGRWSLVLLLLGLVMPLAIVA). Residues 31–131 (QVLSYQEAVL…DISCDKDNRR (101 aa)) constitute a propeptide, cathelin-like domain (CLD). 2 cysteine pairs are disulfide-bonded: Cys-86–Cys-97 and Cys-108–Cys-125. Positions 150-162 (LKKVGQKIKDFLG) are active core.

It belongs to the cathelicidin family. Monomer, homodimer or homotrimer (in vitro). Oligomerizes as tetra- or hexamer in solution (in vitro). Post-translationally, proteolytically cleaved by proteinase PRTN3 into antibacterial peptide LL-37. Proteolytically cleaved by cathepsin CTSG and neutrophil elastase ELANE. In terms of processing, resistant to proteolytic degradation in solution, and when bound to both zwitterionic (mimicking mammalian membranes) and negatively charged membranes (mimicking bacterial membranes). After secretion onto the skin surface, the CAMP gene product is processed by a serine protease-dependent mechanism into multiple novel antimicrobial peptides distinct from and shorter than cathelicidin LL-37. These peptides show enhanced antimicrobial action, acquiring the ability to kill skin pathogens such as S.aureus, E.coli and C.albicans. These peptides have lost the ability to stimulate CXCL8/IL8 release from keratinocytes. The peptides act synergistically, killing bacteria at lower concentrations when present together, and maintain activity at increased salt condition.

It is found in the secreted. The protein resides in the vesicle. Its function is as follows. Antimicrobial protein that is an integral component of the innate immune system. Binds to bacterial lipopolysaccharides (LPS). Acts via neutrophil N-formyl peptide receptors to enhance the release of CXCL2. Postsecretory processing generates multiple cathelicidin antimicrobial peptides with various lengths which act as a topical antimicrobial defense in sweat on skin. The unprocessed precursor form, cathelicidin antimicrobial peptide, inhibits the growth of Gram-negative E.coli and E.aerogenes with efficiencies comparable to that of the mature peptide LL-37 (in vitro). Antimicrobial peptide that is an integral component of the innate immune system. Binds to bacterial lipopolysaccharides (LPS). Causes membrane permeabilization by forming transmembrane pores (in vitro). Causes lysis of E.coli. Exhibits antimicrobial activity against Gram-negative bacteria such as P.aeruginosa, S.typhimurium, E.aerogenes, E.coli and P.syringae, Gram-positive bacteria such as L.monocytogenes, S.epidermidis, S.pyogenes and S.aureus, as well as vancomycin-resistant enterococci (in vitro). Exhibits antimicrobial activity against methicillin-resistant S.aureus, P.mirabilis, and C.albicans in low-salt media, but not in media containing 100 mM NaCl (in vitro). Forms chiral supramolecular assemblies with quinolone signal (PQS) molecules of P.aeruginosa, which may lead to interference of bacterial quorum signaling and perturbance of bacterial biofilm formation. May form supramolecular fiber-like assemblies on bacterial membranes. Induces cytokine and chemokine producation as well as TNF/TNFA and CSF2/GMCSF production in normal human keratinocytes. Exhibits hemolytic activity against red blood cells. In terms of biological role, exhibits antimicrobial activity against E.coli and B.megaterium (in vitro). The sequence is that of Cathelicidin antimicrobial peptide from Papio papio (Guinea baboon).